A 122-amino-acid polypeptide reads, in one-letter code: Large ribosomal subunit protein uL14 (122 aa).

This sequence belongs to the universal ribosomal protein uL14 family. In terms of assembly, part of the 50S ribosomal subunit. Forms a cluster with proteins L3 and L19. In the 70S ribosome, L14 and L19 interact and together make contacts with the 16S rRNA in bridges B5 and B8.

Its function is as follows. Binds to 23S rRNA. Forms part of two intersubunit bridges in the 70S ribosome. This chain is Large ribosomal subunit protein uL14, found in Cellvibrio japonicus (strain Ueda107) (Pseudomonas fluorescens subsp. cellulosa).